The following is a 245-amino-acid chain: 1-(5-phosphoribosyl)-5-[(5-phosphoribosylamino)methylideneamino] imidazole-4-carboxamide isomerase (245 aa).

The active-site Proton acceptor is D10. Catalysis depends on D135, which acts as the Proton donor.

The protein belongs to the HisA/HisF family.

It localises to the cytoplasm. The catalysed reaction is 1-(5-phospho-beta-D-ribosyl)-5-[(5-phospho-beta-D-ribosylamino)methylideneamino]imidazole-4-carboxamide = 5-[(5-phospho-1-deoxy-D-ribulos-1-ylimino)methylamino]-1-(5-phospho-beta-D-ribosyl)imidazole-4-carboxamide. It functions in the pathway amino-acid biosynthesis; L-histidine biosynthesis; L-histidine from 5-phospho-alpha-D-ribose 1-diphosphate: step 4/9. The chain is 1-(5-phosphoribosyl)-5-[(5-phosphoribosylamino)methylideneamino] imidazole-4-carboxamide isomerase from Methanosarcina acetivorans (strain ATCC 35395 / DSM 2834 / JCM 12185 / C2A).